Here is a 657-residue protein sequence, read N- to C-terminus: Pyoverdine export ATP-binding/permease protein PvdT (657 aa).

One can recognise an ABC transporter domain in the interval 6–245 (IDLQDIRKSY…ASTNPGALQA (240 aa)). 43–50 (GASGSGKS) contributes to the ATP binding site. The next 4 membrane-spanning stretches (helical) occupy residues 285-305 (ALTLLGIIIGVASVVVMLAVG), 539-559 (IAAISLLVGGIGVMNIMLMTV), 590-610 (LSVVGGIAGIGLALLVGGVLI), and 620-640 (LVAIAGAFACALITGVVFGFM).

This sequence belongs to the ABC transporter superfamily. Macrolide exporter (TC 3.A.1.122) family. As to quaternary structure, part of the tripartite efflux system PvdRT-OpmQ, which is composed of an inner membrane component with both ATPase and permease domains, PvdT, a periplasmic membrane fusion protein, PvdR, and an outer membrane component, OpmQ.

The protein localises to the cell inner membrane. Part of the tripartite efflux system PvdRT-OpmQ required for the secretion into the extracellular milieu of the siderophore pyoverdine (PVD), which is involved in iron acquisition. This subunit binds PVD and drives its secretion by hydrolyzing ATP. The system is responsible for export of newly synthesized PVD after the final steps of biosynthesis have taken place in the periplasm. It is also responsible for recycling of PVD after internalization of ferri-PVD into the periplasm by the outer-membrane receptor FpvA and release of iron from PVD, thus making PVD available for new cycles of iron uptake. The polypeptide is Pyoverdine export ATP-binding/permease protein PvdT (Pseudomonas fluorescens (strain Pf0-1)).